The following is a 269-amino-acid chain: Tryptophan synthase alpha chain (269 aa).

Residues Glu-50 and Asp-61 each act as proton acceptor in the active site.

This sequence belongs to the TrpA family. Tetramer of two alpha and two beta chains.

It catalyses the reaction (1S,2R)-1-C-(indol-3-yl)glycerol 3-phosphate + L-serine = D-glyceraldehyde 3-phosphate + L-tryptophan + H2O. It functions in the pathway amino-acid biosynthesis; L-tryptophan biosynthesis; L-tryptophan from chorismate: step 5/5. Its function is as follows. The alpha subunit is responsible for the aldol cleavage of indoleglycerol phosphate to indole and glyceraldehyde 3-phosphate. The protein is Tryptophan synthase alpha chain of Francisella tularensis subsp. holarctica (strain FTNF002-00 / FTA).